A 113-amino-acid polypeptide reads, in one-letter code: Protein AaeX (113 aa).

Helical transmembrane passes span 3 to 23 and 43 to 63; these read LLPVMVIFGLSFPPVLFEMIL and FVWHPALFNTALYCCVFYLIS.

The protein belongs to the AaeX family.

It localises to the cell membrane. The protein is Protein AaeX of Sodalis glossinidius (strain morsitans).